Here is a 114-residue protein sequence, read N- to C-terminus: Nucleoid-associated protein Tlet_0999 (114 aa).

The protein belongs to the YbaB/EbfC family. As to quaternary structure, homodimer.

Its subcellular location is the cytoplasm. The protein resides in the nucleoid. Functionally, binds to DNA and alters its conformation. May be involved in regulation of gene expression, nucleoid organization and DNA protection. The protein is Nucleoid-associated protein Tlet_0999 of Pseudothermotoga lettingae (strain ATCC BAA-301 / DSM 14385 / NBRC 107922 / TMO) (Thermotoga lettingae).